The primary structure comprises 451 residues: Tubulin alpha-2 chain (451 aa).

Positions 12, 73, 142, 146, 147, 181, 208, and 230 each coordinate GTP. Aspartate 73 contributes to the Mg(2+) binding site. Glutamate 256 is an active-site residue.

This sequence belongs to the tubulin family. Dimer of alpha and beta chains. A typical microtubule is a hollow water-filled tube with an outer diameter of 25 nm and an inner diameter of 15 nM. Alpha-beta heterodimers associate head-to-tail to form protofilaments running lengthwise along the microtubule wall with the beta-tubulin subunit facing the microtubule plus end conferring a structural polarity. Microtubules usually have 13 protofilaments but different protofilament numbers can be found in some organisms and specialized cells. Mg(2+) serves as cofactor.

The protein resides in the cytoplasm. The protein localises to the cytoskeleton. The enzyme catalyses GTP + H2O = GDP + phosphate + H(+). Tubulin is the major constituent of microtubules, a cylinder consisting of laterally associated linear protofilaments composed of alpha- and beta-tubulin heterodimers. Microtubules grow by the addition of GTP-tubulin dimers to the microtubule end, where a stabilizing cap forms. Below the cap, tubulin dimers are in GDP-bound state, owing to GTPase activity of alpha-tubulin. The chain is Tubulin alpha-2 chain (tubB) from Emericella nidulans (strain FGSC A4 / ATCC 38163 / CBS 112.46 / NRRL 194 / M139) (Aspergillus nidulans).